We begin with the raw amino-acid sequence, 365 residues long: Pyruvate dehydrogenase E1 component subunit beta, mitochondrial (365 aa).

The transit peptide at 1–24 directs the protein to the mitochondrion; the sequence is MLRTRLIQAASSAQRAFSTSQKAL. Residue E85 participates in thiamine diphosphate binding. Residues I138, A186, I187, and D189 each coordinate K(+).

The cofactor is thiamine diphosphate. As to expression, expressed in salivary glands (at protein level).

Its subcellular location is the mitochondrion matrix. The catalysed reaction is N(6)-[(R)-lipoyl]-L-lysyl-[protein] + pyruvate + H(+) = N(6)-[(R)-S(8)-acetyldihydrolipoyl]-L-lysyl-[protein] + CO2. Its function is as follows. The pyruvate dehydrogenase complex catalyzes the overall conversion of pyruvate to acetyl-CoA and CO(2). Might play a role in regulating synapse structure formation at neuromuscular junctions. Might play a role in maintenance of mitochondrial morphology. In Drosophila melanogaster (Fruit fly), this protein is Pyruvate dehydrogenase E1 component subunit beta, mitochondrial.